A 252-amino-acid polypeptide reads, in one-letter code: Adaptation to cold protein B (252 aa).

As to quaternary structure, interacts with AtcC, but not with AtcA and AtcJ. Interacts with the RNA polymerase subunits RpoB and RpoC.

Functionally, involved in cold adaptation. Directly interacts with the RNA polymerase and decreases its activity. May direct the DnaK chaperone to the RNA polymerase to sustain life at low temperatures. Overproduction prevents bacterial growth due to RNA polymerase inhibition. This chain is Adaptation to cold protein B, found in Shewanella oneidensis (strain ATCC 700550 / JCM 31522 / CIP 106686 / LMG 19005 / NCIMB 14063 / MR-1).